We begin with the raw amino-acid sequence, 266 residues long: Ribonuclease 3 (266 aa).

An RNase III domain is found at 34–158 (IERCQEILGY…VIAALYIDGG (125 aa)). Glu-72 is a Mg(2+) binding site. The active site involves Asp-76. Residues Asp-144 and Glu-147 each coordinate Mg(2+). Glu-147 is a catalytic residue. The 70-residue stretch at 185–254 (NHKSVLQQFA…AANALAELHN (70 aa)) folds into the DRBM domain.

This sequence belongs to the ribonuclease III family. In terms of assembly, homodimer. It depends on Mg(2+) as a cofactor.

It is found in the cytoplasm. The enzyme catalyses Endonucleolytic cleavage to 5'-phosphomonoester.. Digests double-stranded RNA. Involved in the processing of primary rRNA transcript to yield the immediate precursors to the large and small rRNAs (23S and 16S). Processes some mRNAs, and tRNAs when they are encoded in the rRNA operon. Processes pre-crRNA and tracrRNA of type II CRISPR loci if present in the organism. This Rhodopirellula baltica (strain DSM 10527 / NCIMB 13988 / SH1) protein is Ribonuclease 3.